The sequence spans 360 residues: Phospho-N-acetylmuramoyl-pentapeptide-transferase (360 aa).

Transmembrane regions (helical) follow at residues 27–47, 70–90, 98–118, 134–154, 168–188, 199–219, 239–259, 263–283, 288–308, and 337–357; these read GALF…ISLL, GTPT…ILLW, VWVT…DDYL, LLLE…YSPA, ALLN…VGAG, GLAI…AYLV, LAVV…FNAP, IFMG…IAVA, IVLA…IIQV, and QVVI…LATL.

This sequence belongs to the glycosyltransferase 4 family. MraY subfamily. Mg(2+) is required as a cofactor.

It localises to the cell inner membrane. It catalyses the reaction UDP-N-acetyl-alpha-D-muramoyl-L-alanyl-gamma-D-glutamyl-meso-2,6-diaminopimeloyl-D-alanyl-D-alanine + di-trans,octa-cis-undecaprenyl phosphate = di-trans,octa-cis-undecaprenyl diphospho-N-acetyl-alpha-D-muramoyl-L-alanyl-D-glutamyl-meso-2,6-diaminopimeloyl-D-alanyl-D-alanine + UMP. It participates in cell wall biogenesis; peptidoglycan biosynthesis. Functionally, catalyzes the initial step of the lipid cycle reactions in the biosynthesis of the cell wall peptidoglycan: transfers peptidoglycan precursor phospho-MurNAc-pentapeptide from UDP-MurNAc-pentapeptide onto the lipid carrier undecaprenyl phosphate, yielding undecaprenyl-pyrophosphoryl-MurNAc-pentapeptide, known as lipid I. The chain is Phospho-N-acetylmuramoyl-pentapeptide-transferase from Methylorubrum populi (strain ATCC BAA-705 / NCIMB 13946 / BJ001) (Methylobacterium populi).